A 197-amino-acid chain; its full sequence is Recombination protein RecR (197 aa).

Residues 54 to 69 (CQQCNNYTEQTLCTLC) form a C4-type zinc finger. The 96-residue stretch at 77-172 (TLLCVVESPA…NISQLAHGIP (96 aa)) folds into the Toprim domain.

The protein belongs to the RecR family.

Its function is as follows. May play a role in DNA repair. It seems to be involved in an RecBC-independent recombinational process of DNA repair. It may act with RecF and RecO. In Legionella pneumophila (strain Paris), this protein is Recombination protein RecR.